The chain runs to 55 residues: Large ribosomal subunit protein bL32 (55 aa).

Residues 1-19 (MAVPKFKKSRANTRARRSQ) are compositionally biased toward basic residues. Residues 1-22 (MAVPKFKKSRANTRARRSQWKA) form a disordered region.

Belongs to the bacterial ribosomal protein bL32 family.

This is Large ribosomal subunit protein bL32 from Corynebacterium urealyticum (strain ATCC 43042 / DSM 7109).